The chain runs to 189 residues: Probable nicotinate-nucleotide adenylyltransferase (189 aa).

The protein belongs to the NadD family.

It carries out the reaction nicotinate beta-D-ribonucleotide + ATP + H(+) = deamido-NAD(+) + diphosphate. It participates in cofactor biosynthesis; NAD(+) biosynthesis; deamido-NAD(+) from nicotinate D-ribonucleotide: step 1/1. Catalyzes the reversible adenylation of nicotinate mononucleotide (NaMN) to nicotinic acid adenine dinucleotide (NaAD). The protein is Probable nicotinate-nucleotide adenylyltransferase of Bacillus cereus (strain G9842).